Here is a 1888-residue protein sequence, read N- to C-terminus: E3 ubiquitin-protein ligase UBR3 (1888 aa).

The disordered stretch occupies residues 1-24 (MAAAAAAAVGGQQPSQPELPAPGL). A UBR-type zinc finger spans residues 118-189 (ALCGLVWTAN…ESGFCKRHQI (72 aa)). Positions 339–362 (GQVDSSDEDDQDGSQGLGKRKRVK) are disordered. 2 positions are modified to phosphoserine: Ser343 and Ser344. 2 helical membrane-spanning segments follow: residues 761-781 (MLEG…HLGM) and 919-939 (LLHC…ILMD). Disordered regions lie at residues 1008 to 1028 (APEV…GSLQ) and 1164 to 1186 (VPPK…RQKA). Residues 1016-1028 (PASTSSDNLGSLQ) are compositionally biased toward polar residues. The stretch at 1168–1199 (KVTAAEKKTLDKEERRQKARERQQKLLAEFAS) forms a coiled coil. Positions 1170–1186 (TAAEKKTLDKEERRQKA) are enriched in basic and acidic residues. Ser1199 carries the phosphoserine modification. An RING-type; degenerate zinc finger spans residues 1306–1364 (DSSCLLAVSIGWEGGVYVQTCGHTLHIDCHKSYMESLRNDQVLQGFSVDKGEFTCPLCR). Residues 1806 to 1826 (QNCGAGTGIFLLINASVIIII) form a helical membrane-spanning segment.

This sequence belongs to the E3 ubiquitin-protein ligase UBR1-like family. Interacts with UBE2A and UBE2B.

It is found in the membrane. It carries out the reaction S-ubiquitinyl-[E2 ubiquitin-conjugating enzyme]-L-cysteine + [acceptor protein]-L-lysine = [E2 ubiquitin-conjugating enzyme]-L-cysteine + N(6)-ubiquitinyl-[acceptor protein]-L-lysine.. It functions in the pathway protein modification; protein ubiquitination. Functionally, E3 ubiquitin-protein ligase which is a component of the N-end rule pathway. Does not bind to proteins bearing specific N-terminal residues that are destabilizing according to the N-end rule, leading to their ubiquitination and subsequent degradation. May play a role in Shh signaling by mediating the ubiquitination of Kif7. May be important for MYH9 function in certain tissues, possibly by regulating the ubiquitination of MYH9 and consequently affecting its interaction with MYO7A. The polypeptide is E3 ubiquitin-protein ligase UBR3 (UBR3) (Homo sapiens (Human)).